Here is a 107-residue protein sequence, read N- to C-terminus: MSTKSKDQHARVSYLYQASQLLFRNVQEPTLSRHYISTAKDVSQKSVMRIHPDIKRTICKGCNSLLVPGKSCSIRFEEPSRKNPSIDRVLWICKKCAFKKRFSDKSC.

Residues Cys59, Cys62, Cys93, and Cys96 each contribute to the Zn(2+) site.

Belongs to the eukaryotic/archaeal RNase P protein component 4 family. It depends on Zn(2+) as a cofactor.

The protein localises to the cytoplasm. It is found in the nucleus. The enzyme catalyses Endonucleolytic cleavage of RNA, removing 5'-extranucleotides from tRNA precursor.. In terms of biological role, component of ribonuclease P, a protein complex that generates mature tRNA molecules by cleaving their 5'-ends. The chain is Ribonuclease P protein subunit rpr2 (rpr2) from Schizosaccharomyces pombe (strain 972 / ATCC 24843) (Fission yeast).